We begin with the raw amino-acid sequence, 161 residues long: ATP synthase subunit b 1 (161 aa).

Residues 3–23 (LDATFYALVGLILFFVLIAYL) form a helical membrane-spanning segment.

It belongs to the ATPase B chain family. In terms of assembly, F-type ATPases have 2 components, F(1) - the catalytic core - and F(0) - the membrane proton channel. F(1) has five subunits: alpha(3), beta(3), gamma(1), delta(1), epsilon(1). F(0) has three main subunits: a(1), b(2) and c(10-14). The alpha and beta chains form an alternating ring which encloses part of the gamma chain. F(1) is attached to F(0) by a central stalk formed by the gamma and epsilon chains, while a peripheral stalk is formed by the delta and b chains.

The protein resides in the cell inner membrane. Its function is as follows. F(1)F(0) ATP synthase produces ATP from ADP in the presence of a proton or sodium gradient. F-type ATPases consist of two structural domains, F(1) containing the extramembraneous catalytic core and F(0) containing the membrane proton channel, linked together by a central stalk and a peripheral stalk. During catalysis, ATP synthesis in the catalytic domain of F(1) is coupled via a rotary mechanism of the central stalk subunits to proton translocation. Component of the F(0) channel, it forms part of the peripheral stalk, linking F(1) to F(0). The protein is ATP synthase subunit b 1 of Sinorhizobium medicae (strain WSM419) (Ensifer medicae).